The chain runs to 325 residues: Biotin synthase (325 aa).

Residues 51–280 (FMGRKADLCT…NVYIRYAGGR (230 aa)) form the Radical SAM core domain. The [4Fe-4S] cluster site is built by cysteine 69, cysteine 73, and cysteine 76. Residues serine 113, cysteine 145, cysteine 205, and arginine 275 each coordinate [2Fe-2S] cluster.

This sequence belongs to the radical SAM superfamily. Biotin synthase family. In terms of assembly, homodimer. [4Fe-4S] cluster serves as cofactor. The cofactor is [2Fe-2S] cluster.

It catalyses the reaction (4R,5S)-dethiobiotin + (sulfur carrier)-SH + 2 reduced [2Fe-2S]-[ferredoxin] + 2 S-adenosyl-L-methionine = (sulfur carrier)-H + biotin + 2 5'-deoxyadenosine + 2 L-methionine + 2 oxidized [2Fe-2S]-[ferredoxin]. It participates in cofactor biosynthesis; biotin biosynthesis; biotin from 7,8-diaminononanoate: step 2/2. Catalyzes the conversion of dethiobiotin (DTB) to biotin by the insertion of a sulfur atom into dethiobiotin via a radical-based mechanism. The polypeptide is Biotin synthase (Clostridioides difficile (strain 630) (Peptoclostridium difficile)).